Here is a 348-residue protein sequence, read N- to C-terminus: L-threonine 3-dehydrogenase (348 aa).

Cys-38 serves as a coordination point for Zn(2+). Catalysis depends on charge relay system residues Thr-40 and His-43. Zn(2+) contacts are provided by His-63, Glu-64, Cys-93, Cys-96, Cys-99, and Cys-107. NAD(+)-binding positions include Ile-175, Asp-195, Arg-200, 263–265 (LGI), and 287–288 (IY).

The protein belongs to the zinc-containing alcohol dehydrogenase family. Homotetramer. Requires Zn(2+) as cofactor.

Its subcellular location is the cytoplasm. It catalyses the reaction L-threonine + NAD(+) = (2S)-2-amino-3-oxobutanoate + NADH + H(+). It participates in amino-acid degradation; L-threonine degradation via oxydo-reductase pathway; glycine from L-threonine: step 1/2. Functionally, catalyzes the NAD(+)-dependent oxidation of L-threonine to 2-amino-3-ketobutyrate. The chain is L-threonine 3-dehydrogenase from Deinococcus radiodurans (strain ATCC 13939 / DSM 20539 / JCM 16871 / CCUG 27074 / LMG 4051 / NBRC 15346 / NCIMB 9279 / VKM B-1422 / R1).